The chain runs to 337 residues: 1-aminocyclopropane-1-carboxylate deaminase (337 aa).

Lys-50 is modified (N6-(pyridoxal phosphate)lysine). Ser-77 acts as the Nucleophile in catalysis.

It belongs to the ACC deaminase/D-cysteine desulfhydrase family. Homotrimer. It depends on pyridoxal 5'-phosphate as a cofactor.

The enzyme catalyses 1-aminocyclopropane-1-carboxylate + H2O = 2-oxobutanoate + NH4(+). In terms of biological role, catalyzes a cyclopropane ring-opening reaction, the irreversible conversion of 1-aminocyclopropane-1-carboxylate (ACC) to ammonia and alpha-ketobutyrate. Allows growth on ACC as a nitrogen source. This chain is 1-aminocyclopropane-1-carboxylate deaminase, found in Allorhizobium ampelinum (strain ATCC BAA-846 / DSM 112012 / S4) (Agrobacterium vitis (strain S4)).